The primary structure comprises 236 residues: Ubiquinone biosynthesis O-methyltransferase (236 aa).

4 residues coordinate S-adenosyl-L-methionine: Arg39, Gly59, Asp80, and Met124.

It belongs to the methyltransferase superfamily. UbiG/COQ3 family.

The enzyme catalyses a 3-demethylubiquinol + S-adenosyl-L-methionine = a ubiquinol + S-adenosyl-L-homocysteine + H(+). The catalysed reaction is a 3-(all-trans-polyprenyl)benzene-1,2-diol + S-adenosyl-L-methionine = a 2-methoxy-6-(all-trans-polyprenyl)phenol + S-adenosyl-L-homocysteine + H(+). It participates in cofactor biosynthesis; ubiquinone biosynthesis. Its function is as follows. O-methyltransferase that catalyzes the 2 O-methylation steps in the ubiquinone biosynthetic pathway. This chain is Ubiquinone biosynthesis O-methyltransferase, found in Shewanella sp. (strain MR-4).